The primary structure comprises 275 residues: Large ribosomal subunit protein uL2 (275 aa).

Positions 221–275 (RGMTMNPVDHPMGGGEGRSKGHIPQSPWGIPAKGYKTRKSKKPSDKLIVKRRKQK) are disordered.

The protein belongs to the universal ribosomal protein uL2 family. As to quaternary structure, part of the 50S ribosomal subunit. Forms a bridge to the 30S subunit in the 70S ribosome.

One of the primary rRNA binding proteins. Required for association of the 30S and 50S subunits to form the 70S ribosome, for tRNA binding and peptide bond formation. It has been suggested to have peptidyltransferase activity; this is somewhat controversial. Makes several contacts with the 16S rRNA in the 70S ribosome. The sequence is that of Large ribosomal subunit protein uL2 from Kosmotoga olearia (strain ATCC BAA-1733 / DSM 21960 / TBF 19.5.1).